Reading from the N-terminus, the 164-residue chain is Replication restart protein DnaT (164 aa).

This sequence belongs to the DnaT family. In terms of assembly, homooligomerizes. Interacts with PriB. Component of the replication restart primosome. Primosome assembly occurs via a 'hand-off' mechanism. PriA binds to replication forks, subsequently PriB then DnaT bind; DnaT then displaces ssDNA to generate the helicase loading substrate.

Its function is as follows. Involved in the restart of stalled replication forks, which reloads the replicative helicase on sites other than the origin of replication. Can function in multiple replication restart pathways. Displaces ssDNA from a PriB-ssDNA complex. Probably forms a spiral filament on ssDNA. The protein is Replication restart protein DnaT of Buchnera aphidicola subsp. Acyrthosiphon pisum (strain 5A).